The following is a 213-amino-acid chain: LexA repressor (213 aa).

The H-T-H motif DNA-binding region spans 27 to 47; that stretch reads QTEIARAFGFKGVRAAQYHLE. Catalysis depends on for autocatalytic cleavage activity residues serine 133 and lysine 170.

It belongs to the peptidase S24 family. Homodimer.

The catalysed reaction is Hydrolysis of Ala-|-Gly bond in repressor LexA.. Its function is as follows. Represses a number of genes involved in the response to DNA damage (SOS response), including recA and lexA. In the presence of single-stranded DNA, RecA interacts with LexA causing an autocatalytic cleavage which disrupts the DNA-binding part of LexA, leading to derepression of the SOS regulon and eventually DNA repair. The protein is LexA repressor of Xanthomonas campestris.